A 701-amino-acid polypeptide reads, in one-letter code: Elongation factor G (701 aa).

Positions 11–287 (TKVRNIGIMA…AVIDYLPSPL (277 aa)) constitute a tr-type G domain. GTP contacts are provided by residues 20–27 (AHIDAGKT), 84–88 (DTPGH), and 138–141 (NKMD).

It belongs to the TRAFAC class translation factor GTPase superfamily. Classic translation factor GTPase family. EF-G/EF-2 subfamily.

It localises to the cytoplasm. Its function is as follows. Catalyzes the GTP-dependent ribosomal translocation step during translation elongation. During this step, the ribosome changes from the pre-translocational (PRE) to the post-translocational (POST) state as the newly formed A-site-bound peptidyl-tRNA and P-site-bound deacylated tRNA move to the P and E sites, respectively. Catalyzes the coordinated movement of the two tRNA molecules, the mRNA and conformational changes in the ribosome. The protein is Elongation factor G of Mycobacterium ulcerans (strain Agy99).